Consider the following 428-residue polypeptide: Trigger factor (428 aa).

Positions 163–248 (GDTVVIDFEG…VHEVKAKQLP (86 aa)) constitute a PPIase FKBP-type domain.

This sequence belongs to the FKBP-type PPIase family. Tig subfamily.

It localises to the cytoplasm. The catalysed reaction is [protein]-peptidylproline (omega=180) = [protein]-peptidylproline (omega=0). Functionally, involved in protein export. Acts as a chaperone by maintaining the newly synthesized protein in an open conformation. Functions as a peptidyl-prolyl cis-trans isomerase. The sequence is that of Trigger factor from Geobacillus kaustophilus (strain HTA426).